The primary structure comprises 414 residues: Protein phosphatase 2C homolog 3 (414 aa).

Residues 23-288 form the PPM-type phosphatase domain; that stretch reads LYGLSSMQGW…DNMTVCIVAL (266 aa). Residues Asp-62, Gly-63, Asp-230, and Asp-279 each contribute to the Mn(2+) site. Disordered regions lie at residues 313–368 and 380–414; these read APPE…TNGS and FPHK…SAAD. The segment covering 350–363 has biased composition (basic and acidic residues); that stretch reads GYDKDANENSKEDD. The span at 390 to 400 shows a compositional bias: polar residues; that stretch reads SSETDIVNSNK. Residues 401–414 are compositionally biased toward basic and acidic residues; the sequence is DVADDHKEAVSAAD.

This sequence belongs to the PP2C family. In terms of assembly, monomer. Mg(2+) is required as a cofactor. It depends on Mn(2+) as a cofactor.

The protein localises to the cytoplasm. It is found in the nucleus. It catalyses the reaction O-phospho-L-seryl-[protein] + H2O = L-seryl-[protein] + phosphate. It carries out the reaction O-phospho-L-threonyl-[protein] + H2O = L-threonyl-[protein] + phosphate. In terms of biological role, dephosphorylating regulator for many key proteins. Has an important role in osmotic stability and cell shape control. It may negatively regulate the osmosensing signal transmitted through wis1 map kinase. In Schizosaccharomyces pombe (strain 972 / ATCC 24843) (Fission yeast), this protein is Protein phosphatase 2C homolog 3 (ptc3).